The sequence spans 227 residues: MSKRWFVTGTDTEVGKSVASSALLQAANRAGYPSAGYKPVASGSEMTAEGLRNGDALALQANSGVALDYDEVNPYVFAEPTSPHIVSADEGRPIDAARLSDGLRRLEQRADWVLVEGAGGWFTPLSAEYTFADWVRQEQLPVILVVGIKLGCINHAVLTAQAVQQAGLTLAGWIANDVGGAPGRRHQEYLATLRRMLPRRCWAKSRTCRRPERAPLGQYLDISLLAQ.

Residue 13–18 (EVGKSV) coordinates ATP. A Mg(2+)-binding site is contributed by serine 17. Lysine 38 is a catalytic residue. Serine 42 is a binding site for substrate. ATP is bound by residues aspartate 55, 116 to 119 (EGAG), and 176 to 177 (ND). The Mg(2+) site is built by aspartate 55 and glutamate 116.

It belongs to the dethiobiotin synthetase family. As to quaternary structure, homodimer. Mg(2+) is required as a cofactor.

The protein localises to the cytoplasm. The catalysed reaction is (7R,8S)-7,8-diammoniononanoate + CO2 + ATP = (4R,5S)-dethiobiotin + ADP + phosphate + 3 H(+). The protein operates within cofactor biosynthesis; biotin biosynthesis; biotin from 7,8-diaminononanoate: step 1/2. In terms of biological role, catalyzes a mechanistically unusual reaction, the ATP-dependent insertion of CO2 between the N7 and N8 nitrogen atoms of 7,8-diaminopelargonic acid (DAPA, also called 7,8-diammoniononanoate) to form a ureido ring. This Serratia marcescens protein is ATP-dependent dethiobiotin synthetase BioD.